The following is a 234-amino-acid chain: Adenosine 5'-phosphosulfate reductase (234 aa).

Residues C120, C121, C203, and C206 each coordinate [4Fe-4S] cluster. The active-site Nucleophile; cysteine thiosulfonate intermediate is C229.

It belongs to the PAPS reductase family. CysH subfamily. Requires [4Fe-4S] cluster as cofactor.

It localises to the cytoplasm. It carries out the reaction [thioredoxin]-disulfide + sulfite + AMP + 2 H(+) = adenosine 5'-phosphosulfate + [thioredoxin]-dithiol. It participates in sulfur metabolism; hydrogen sulfide biosynthesis; sulfite from sulfate. Functionally, catalyzes the formation of sulfite from adenosine 5'-phosphosulfate (APS) using thioredoxin as an electron donor. This Bacillus cereus (strain 03BB102) protein is Adenosine 5'-phosphosulfate reductase.